Consider the following 356-residue polypeptide: Serine/threonine-protein phosphatase 4 regulatory subunit 2 (356 aa).

Positions 202–240 (NEGAGDDEDDDQDYVDEDSATSEDEEEDVEEEEEEEGPE) are enriched in acidic residues. The disordered stretch occupies residues 202-335 (NEGAGDDEDD…PQLTTSATNV (134 aa)). Positions 326–335 (PQLTTSATNV) are enriched in polar residues.

It belongs to the PPP4R2 family. Regulatory subunit (R2) of the histone H2A phosphatase complex (HTP-C) consisting of PPH3, PSY2 and PSY4.

It localises to the nucleus. Regulatory subunit of the histone H2A phosphatase complex, which dephosphorylates H2AS128ph (gamma-H2A) that has been displaced from sites of DNA lesions in the double-stranded DNA break repair process. Dephosphorylation is necessary for efficient recovery from the DNA damage checkpoint. This Eremothecium gossypii (strain ATCC 10895 / CBS 109.51 / FGSC 9923 / NRRL Y-1056) (Yeast) protein is Serine/threonine-protein phosphatase 4 regulatory subunit 2 (PSY4).